Consider the following 400-residue polypeptide: Probable phospho-2-dehydro-3-deoxyheptonate aldolase (400 aa).

Belongs to the class-II DAHP synthase family.

The enzyme catalyses D-erythrose 4-phosphate + phosphoenolpyruvate + H2O = 7-phospho-2-dehydro-3-deoxy-D-arabino-heptonate + phosphate. The protein operates within antibiotic biosynthesis; phenazine biosynthesis. This Pseudomonas fluorescens protein is Probable phospho-2-dehydro-3-deoxyheptonate aldolase (phzC).